Consider the following 126-residue polypeptide: Protein VraC (126 aa).

The chain is Protein VraC from Staphylococcus haemolyticus (strain JCSC1435).